The chain runs to 254 residues: Alcohol dehydrogenase 2 (254 aa).

10–33 (FVAGLGGIGFDTSREIVKSGPKNL) is an NAD(+) binding site. Ser138 contributes to the substrate binding site. The active-site Proton acceptor is the Tyr151.

The protein belongs to the short-chain dehydrogenases/reductases (SDR) family. Homodimer.

It carries out the reaction a primary alcohol + NAD(+) = an aldehyde + NADH + H(+). It catalyses the reaction a secondary alcohol + NAD(+) = a ketone + NADH + H(+). The sequence is that of Alcohol dehydrogenase 2 (Adh2) from Drosophila wheeleri (Fruit fly).